The primary structure comprises 375 residues: Period circadian protein (375 aa).

Disordered stretches follow at residues 28–118 (TAPV…AVTP), 140–189 (KHRE…WEGE), and 220–254 (CQAS…NQYA). Residues 69 to 91 (SGNFTTGSNLHMSSVTNTSNAGT) show a composition bias toward low complexity. Gly residues predominate over residues 92 to 113 (GTSGTGNSGGGGGGGGGGGPGN). Residues 145 to 156 (RGRSGEKNKKSA) are compositionally biased toward basic and acidic residues. A compositionally biased stretch (gly residues) spans 224–243 (GAGGGGSGSVGGTGNIGSGG). A compositionally biased stretch (polar residues) spans 245-254 (NAQPSTNQYA).

As to quaternary structure, forms a heterodimer with timeless (TIM); the complex then translocates into the nucleus. In terms of processing, phosphorylated with a circadian rhythmicity, probably by the double-time protein (dbt). Phosphorylation could be implicated in the stability of per monomer and in the formation of heterodimer per-tim.

Its subcellular location is the nucleus. The protein resides in the cytoplasm. The protein localises to the perinuclear region. Its function is as follows. Essential for biological clock functions. Determines the period length of circadian and ultradian rhythms; an increase in PER dosage leads to shortened circadian rhythms and a decrease leads to lengthened circadian rhythms. Essential for the circadian rhythmicity of locomotor activity, eclosion behavior, and for the rhythmic component of the male courtship song that originates in the thoracic nervous system. The biological cycle depends on the rhythmic formation and nuclear localization of the TIM-PER complex. Light induces the degradation of TIM, which promotes elimination of PER. Nuclear activity of the heterodimer coordinatively regulates PER and TIM transcription through a negative feedback loop. Behaves as a negative element in circadian transcriptional loop. Does not appear to bind DNA, suggesting indirect transcriptional inhibition. This Drosophila capricorni (Fruit fly) protein is Period circadian protein (per).